The sequence spans 201 residues: Myosin regulatory light chain 2 (201 aa).

The disordered stretch occupies residues 1 to 48; the sequence is MADKDKKVKKKKAKEDAPAEEAPAAAAPAGDRQSSRGSRKAKRTGSNV. Residues 20–29 are compositionally biased toward low complexity; it reads EEAPAAAAPA. Residue S46 is modified to Phosphoserine. EF-hand domains lie at 55-90, 125-158, and 159-194; these read KQVAEFKEAFQLMDHDKDGIIGKNDLRATFDSLGRL, DEDDVVINAFKTFDEEGKIDSERLRHALMTWGDK, and FSADEVDEAYDQMDIDDKGYIDTTKLIAMLTASAEE. The Ca(2+) site is built by D68, D70, D72, and D79.

As to quaternary structure, myosin is a hexamer of 2 heavy chains and 4 light chains.

This chain is Myosin regulatory light chain 2, found in Bombyx mori (Silk moth).